A 200-amino-acid polypeptide reads, in one-letter code: MAGIKQHSGLVVPLDAANVDTDAIIPKQFLQAITRVGFGKHLFHEWRYLDEEGTVPNPKFVLNFPEYQGATILLARKNLGCGSSREHAPWALADYGFKVMIAPSFADIFYNNSLNNHMLPIRLNEEEVEEIFQWVWKNKGCEIHVNLENLTVTTGNKIYHFELDEFRRHCLLNGLDNIGLTLQHEDKIAEYEKNIPAFLR.

Belongs to the LeuD family. LeuD type 1 subfamily. As to quaternary structure, heterodimer of LeuC and LeuD.

It catalyses the reaction (2R,3S)-3-isopropylmalate = (2S)-2-isopropylmalate. Its pathway is amino-acid biosynthesis; L-leucine biosynthesis; L-leucine from 3-methyl-2-oxobutanoate: step 2/4. Functionally, catalyzes the isomerization between 2-isopropylmalate and 3-isopropylmalate, via the formation of 2-isopropylmaleate. This Histophilus somni (strain 129Pt) (Haemophilus somnus) protein is 3-isopropylmalate dehydratase small subunit.